The following is a 540-amino-acid chain: Acyl-CoA synthetase 7 (540 aa).

Residues 186 to 194 (SSGTTGKPK), D415, R430, and K522 each bind ATP. The Microbody targeting signal motif lies at 538 to 540 (AKL).

Belongs to the ATP-dependent AMP-binding enzyme family. In terms of tissue distribution, expressed in intestine.

The protein localises to the peroxisome. It carries out the reaction nonanoate + ATP + CoA = nonanoyl-CoA + AMP + diphosphate. It catalyses the reaction IC-asc-C7 + ATP + CoA = IC-asc-C7-CoA + AMP + diphosphate. The enzyme catalyses IC-asc-C9 + ATP + CoA = IC-asc-C9-CoA + AMP + diphosphate. In terms of biological role, plays a role in ascaroside pheromones biosynthesis, which regulates development and behavior. Specifically, activates the side chain of medium-chain indol-3-carbonyl (IC)-ascarosides for shortening through beta-oxidation. Converts IC-asc-C7 and IC-asc-C9 into IC-asc-C7-CoA and IC-asc-C9-CoA, respectively. May play a role in fatty-acid metabolism by activating and converting nonanoate (C9) into nonanoyl-CoA (C9-CoA). This chain is Acyl-CoA synthetase 7, found in Caenorhabditis elegans.